The following is a 393-amino-acid chain: Cysteine protease ATG4B (393 aa).

The residue at position 1 (M1) is an N-acetylmethionine. S34 bears the Phosphoserine; by PKB/AKT1 and PKB/AKT2 mark. C74 serves as the catalytic Nucleophile. The residue at position 189 (C189) is an S-nitrosocysteine. Residues D278 and H280 contribute to the active site. S-nitrosocysteine occurs at positions 292 and 301. A disulfide bond links C292 and C361. A Phosphoserine; by ULK1 modification is found at S316. Residue S383 is modified to Phosphoserine; by STK26. Positions 388-391 match the LIR motif; sequence FEIL. At S392 the chain carries Phosphoserine.

The protein belongs to the peptidase C54 family. In terms of assembly, interacts with PFKP; promoting phosphorylation of ATG4B at Ser-34. Interacts with GBP7. Phosphorylation at Ser-383 and Ser-392 promotes autophagy by increasing protein delipidation activity without affecting proteolytic activation of ATG8 proteins. Phosphorylation at Ser-316 by ULK1 inhibits autophagy by decreasing both proteolytic activation and delipidation activities. Phosphorylation at Ser-316 is dephosphorylated by protein phosphatase 2A (PP2A). Phosphorylation at Ser-34 by AKT2 promotes its hydrolase activity, leading to increased proteolytic activation and delipidation of ATG8 family proteins. Phosphorylation at Ser-34 by AKT1 promotes mitochondrial localization and inhibition of the F1F0-ATP synthase activity, leading to elevation of mitochondrial reactive oxygen species (ROS). Post-translationally, ubiquitinated by RNF5, leading to its degradation by the proteasome. In terms of processing, S-nitrosylation at Cys-189 and Cys-292 in response to high glucose decreases both proteolytic activation and delipidation activities. O-glycosylated by OGT, leading to increase protease activity, thereby promoting the proteolytic activation of ATG8 family proteins. Post-translationally, forms reversible intrachain disulfide bonds in response to oxidative stress. Forms interchain disulfide bonds, leading to formation of homooligomers in response to oxidation.

It is found in the cytoplasm. It localises to the cytosol. The protein localises to the cytoplasmic vesicle. Its subcellular location is the autophagosome. The protein resides in the endoplasmic reticulum. It is found in the mitochondrion. It catalyses the reaction [protein]-C-terminal L-amino acid-glycyl-phosphatidylethanolamide + H2O = [protein]-C-terminal L-amino acid-glycine + a 1,2-diacyl-sn-glycero-3-phosphoethanolamine. It carries out the reaction [protein]-C-terminal L-amino acid-glycyl-phosphatidylserine + H2O = [protein]-C-terminal L-amino acid-glycine + a 1,2-diacyl-sn-glycero-3-phospho-L-serine. With respect to regulation, inhibited by N-ethylmaleimide. Redox-regulated during autophagy since reducing conditions activate ATG4A whereas an oxidizing environment such as the presence of H(2)O(2) inhibits its activity. The cysteine protease activity compounds is inhibited by styrylquinoline compounds 4-28 and LV-320. Cysteine protease that plays a key role in autophagy by mediating both proteolytic activation and delipidation of ATG8 family proteins. Required for canonical autophagy (macroautophagy), non-canonical autophagy as well as for mitophagy. The protease activity is required for proteolytic activation of ATG8 family proteins: cleaves the C-terminal amino acid of ATG8 proteins MAP1LC3A, MAP1LC3B, MAP1LC3C, GABARAPL1, GABARAPL2 and GABARAP, to reveal a C-terminal glycine. Exposure of the glycine at the C-terminus is essential for ATG8 proteins conjugation to phosphatidylethanolamine (PE) and insertion to membranes, which is necessary for autophagy. Protease activity is also required to counteract formation of high-molecular weight conjugates of ATG8 proteins (ATG8ylation): acts as a deubiquitinating-like enzyme that removes ATG8 conjugated to other proteins, such as ATG3. In addition to the protease activity, also mediates delipidation of ATG8 family proteins. Catalyzes delipidation of PE-conjugated forms of ATG8 proteins during macroautophagy. Also involved in non-canonical autophagy, a parallel pathway involving conjugation of ATG8 proteins to single membranes at endolysosomal compartments, by catalyzing delipidation of ATG8 proteins conjugated to phosphatidylserine (PS). Compared to other members of the family (ATG4A, ATG4C or ATG4C), constitutes the major protein for proteolytic activation of ATG8 proteins, while it displays weaker delipidation activity than other ATG4 paralogs. Involved in phagophore growth during mitophagy independently of its protease activity and of ATG8 proteins: acts by regulating ATG9A trafficking to mitochondria and promoting phagophore-endoplasmic reticulum contacts during the lipid transfer phase of mitophagy. The sequence is that of Cysteine protease ATG4B from Homo sapiens (Human).